The chain runs to 334 residues: Anthranilate phosphoribosyltransferase (334 aa).

5-phospho-alpha-D-ribose 1-diphosphate contacts are provided by residues Gly81, 84-85, Thr89, 91-94, 109-117, and Ala121; these read GD, NIST, and KHGSRSVSS. Anthranilate is bound at residue Gly81. Ser93 contributes to the Mg(2+) binding site. Residue Arg167 participates in anthranilate binding. Mg(2+) contacts are provided by Asp225 and Glu226.

Belongs to the anthranilate phosphoribosyltransferase family. Homodimer. It depends on Mg(2+) as a cofactor.

The catalysed reaction is N-(5-phospho-beta-D-ribosyl)anthranilate + diphosphate = 5-phospho-alpha-D-ribose 1-diphosphate + anthranilate. Its pathway is amino-acid biosynthesis; L-tryptophan biosynthesis; L-tryptophan from chorismate: step 2/5. Catalyzes the transfer of the phosphoribosyl group of 5-phosphorylribose-1-pyrophosphate (PRPP) to anthranilate to yield N-(5'-phosphoribosyl)-anthranilate (PRA). The polypeptide is Anthranilate phosphoribosyltransferase (Actinobacillus pleuropneumoniae serotype 7 (strain AP76)).